Consider the following 404-residue polypeptide: 8-amino-7-oxononanoate synthase (404 aa).

Substrate is bound at residue Arg-20. 116-117 is a binding site for pyridoxal 5'-phosphate; the sequence is GY. His-141 contributes to the substrate binding site. Positions 187, 215, and 243 each coordinate pyridoxal 5'-phosphate. Lys-246 is modified (N6-(pyridoxal phosphate)lysine). Substrate is bound at residue Thr-366.

Belongs to the class-II pyridoxal-phosphate-dependent aminotransferase family. BioF subfamily. As to quaternary structure, homodimer. Pyridoxal 5'-phosphate is required as a cofactor.

It catalyses the reaction 6-carboxyhexanoyl-[ACP] + L-alanine + H(+) = (8S)-8-amino-7-oxononanoate + holo-[ACP] + CO2. The protein operates within cofactor biosynthesis; biotin biosynthesis. In terms of biological role, catalyzes the decarboxylative condensation of pimeloyl-[acyl-carrier protein] and L-alanine to produce 8-amino-7-oxononanoate (AON), [acyl-carrier protein], and carbon dioxide. The polypeptide is 8-amino-7-oxononanoate synthase (Cupriavidus taiwanensis (strain DSM 17343 / BCRC 17206 / CCUG 44338 / CIP 107171 / LMG 19424 / R1) (Ralstonia taiwanensis (strain LMG 19424))).